A 212-amino-acid polypeptide reads, in one-letter code: Ribosomal RNA large subunit methyltransferase E (212 aa).

S-adenosyl-L-methionine-binding residues include G57, W59, D77, D93, and D122. Residue K162 is the Proton acceptor of the active site.

This sequence belongs to the class I-like SAM-binding methyltransferase superfamily. RNA methyltransferase RlmE family.

It localises to the cytoplasm. The catalysed reaction is uridine(2552) in 23S rRNA + S-adenosyl-L-methionine = 2'-O-methyluridine(2552) in 23S rRNA + S-adenosyl-L-homocysteine + H(+). Its function is as follows. Specifically methylates the uridine in position 2552 of 23S rRNA at the 2'-O position of the ribose in the fully assembled 50S ribosomal subunit. This Coxiella burnetii (strain RSA 331 / Henzerling II) protein is Ribosomal RNA large subunit methyltransferase E.